Reading from the N-terminus, the 2037-residue chain is Fatty acid synthase subunit beta (2037 aa).

The acetyltransferase stretch occupies residues 1–453; sequence MSTHRPFQLT…VYDTFDGSDF (453 aa). Ser-261 acts as the For acetyltransferase activity in catalysis. Positions 465–798 are enoyl reductase; the sequence is VKLITELPVH…GSRVMTSKES (334 aa). The dehydratase stretch occupies residues 1132–1612; it reads GTELNWLQAF…LPNDTLQTTM (481 aa). A MaoC-like domain is found at 1506–1634; the sequence is NGKTIEESVI…KVETRNVETE (129 aa). Residues 1613–1833 form a malonyl/palmitoyl transferase region; it reads EHVGMINGRK…MTMQVAVPRD (221 aa). The active-site For malonyltransferase activity is the Ser-1796.

Belongs to the fungal fatty acid synthetase subunit beta family. [Alpha(6)beta(6)] hexamers of two multifunctional subunits (alpha and beta).

The enzyme catalyses acetyl-CoA + n malonyl-CoA + 2n NADPH + 4n H(+) = a long-chain-acyl-CoA + n CoA + n CO2 + 2n NADP(+).. It carries out the reaction holo-[ACP] + acetyl-CoA = acetyl-[ACP] + CoA. It catalyses the reaction holo-[ACP] + malonyl-CoA = malonyl-[ACP] + CoA. The catalysed reaction is a (3R)-hydroxyacyl-[ACP] = a (2E)-enoyl-[ACP] + H2O. The enzyme catalyses a 2,3-saturated acyl-[ACP] + NAD(+) = a (2E)-enoyl-[ACP] + NADH + H(+). It carries out the reaction (9Z)-octadecenoyl-[ACP] + H2O = (9Z)-octadecenoate + holo-[ACP] + H(+). Its function is as follows. Fatty acid synthetase catalyzes the formation of long-chain fatty acids from acetyl-CoA, malonyl-CoA and NADPH. The beta subunit contains domains for: [acyl-carrier-protein] acetyltransferase and malonyltransferase, S-acyl fatty acid synthase thioesterase, enoyl-[acyl-carrier-protein] reductase, and 3-hydroxypalmitoyl-[acyl-carrier-protein] dehydratase. This chain is Fatty acid synthase subunit beta (FAS1), found in Candida albicans (Yeast).